The chain runs to 201 residues: Small ribosomal subunit protein uS4c (201 aa).

A disordered region spans residues leucine 15–glutamine 43. Residues methionine 89 to asparagine 150 enclose the S4 RNA-binding domain.

Belongs to the universal ribosomal protein uS4 family. Part of the 30S ribosomal subunit. Contacts protein S5. The interaction surface between S4 and S5 is involved in control of translational fidelity.

The protein resides in the plastid. It localises to the chloroplast. Its function is as follows. One of the primary rRNA binding proteins, it binds directly to 16S rRNA where it nucleates assembly of the body of the 30S subunit. Functionally, with S5 and S12 plays an important role in translational accuracy. This chain is Small ribosomal subunit protein uS4c (rps4), found in Amborella trichopoda.